Reading from the N-terminus, the 148-residue chain is MKALIILGLVLLSVTVQGKIFERCELARTLKKLGLDGYKGVSLANWVCLAKWESGYNTDATNYNPGDESTDYGIFQINSRYWCNNGKTPGAVNACHISCNALLQNNIADAVACAKRVVSDPQGIRAWVAWKKHCQNRDVSQYVEGCGV.

An N-terminal signal peptide occupies residues 1–18 (MKALIILGLVLLSVTVQG). The C-type lysozyme domain occupies 19-148 (KIFERCELAR…VSQYVEGCGV (130 aa)). 4 disulfides stabilise this stretch: Cys-24/Cys-146, Cys-48/Cys-134, Cys-83/Cys-99, and Cys-95/Cys-113. Residues Glu-53 and Asp-71 contribute to the active site.

Belongs to the glycosyl hydrolase 22 family. Monomer.

It catalyses the reaction Hydrolysis of (1-&gt;4)-beta-linkages between N-acetylmuramic acid and N-acetyl-D-glucosamine residues in a peptidoglycan and between N-acetyl-D-glucosamine residues in chitodextrins.. Lysozymes have primarily a bacteriolytic function; those in tissues and body fluids are associated with the monocyte-macrophage system and enhance the activity of immunoagents. In Colobus angolensis (Angolan colobus), this protein is Lysozyme C (LYZ).